The primary structure comprises 311 residues: tRNA dimethylallyltransferase (311 aa).

ATP is bound at residue 19-26 (GPSGSGKS). A substrate-binding site is contributed by 21–26 (SGSGKS). The interaction with substrate tRNA stretch occupies residues 44–47 (DSLS).

This sequence belongs to the IPP transferase family. As to quaternary structure, monomer. Requires Mg(2+) as cofactor.

The enzyme catalyses adenosine(37) in tRNA + dimethylallyl diphosphate = N(6)-dimethylallyladenosine(37) in tRNA + diphosphate. In terms of biological role, catalyzes the transfer of a dimethylallyl group onto the adenine at position 37 in tRNAs that read codons beginning with uridine, leading to the formation of N6-(dimethylallyl)adenosine (i(6)A). The chain is tRNA dimethylallyltransferase from Helicobacter pylori (strain ATCC 700392 / 26695) (Campylobacter pylori).